The sequence spans 421 residues: U-box domain-containing protein 26 (421 aa).

Residues Gln-13–Asn-87 enclose the U-box domain.

It carries out the reaction S-ubiquitinyl-[E2 ubiquitin-conjugating enzyme]-L-cysteine + [acceptor protein]-L-lysine = [E2 ubiquitin-conjugating enzyme]-L-cysteine + N(6)-ubiquitinyl-[acceptor protein]-L-lysine.. Its pathway is protein modification; protein ubiquitination. Its function is as follows. Functions as an E3 ubiquitin ligase. The sequence is that of U-box domain-containing protein 26 (PUB26) from Arabidopsis thaliana (Mouse-ear cress).